Consider the following 254-residue polypeptide: Probable protein ABIL5 (254 aa).

The segment at 1–26 (MEVAEAGVDGVAGRRQQEEASGAAPF) is disordered.

It belongs to the ABI family. In terms of assembly, binds SCAR.

It is found in the cytoplasm. It localises to the cytoskeleton. Functionally, involved in regulation of actin and microtubule organization. Part of a WAVE complex that activates the Arp2/3 complex. This Oryza sativa subsp. japonica (Rice) protein is Probable protein ABIL5.